The sequence spans 213 residues: MSKISNDVLRESVSALVEGAKTKPRKFQETVELQIGLKNYDPQKDKRFSGSVRLPFVPRPRMRVRAGDVKHCEQAGAIGVDAKGVEDLKKLNKNKKLVKKLAQAYHAFLASDSVIKQIPRLLGPGLNKAGKFPAPINKNLEEMVLDTKCSIKFQLKKVLCMGVAVANVGMTEGEIRTNIMYAINFLVSLLKKNWQNVRCLYIKSTMGKPIRIY.

This sequence belongs to the universal ribosomal protein uL1 family.

This chain is Large ribosomal subunit protein uL1 (RPL10A), found in Chlamydomonas reinhardtii (Chlamydomonas smithii).